Consider the following 191-residue polypeptide: Threonylcarbamoyl-AMP synthase (191 aa).

Residues 7 to 191 (QSELNDALKI…FHASTGKRLR (185 aa)) form the YrdC-like domain.

This sequence belongs to the SUA5 family. TsaC subfamily.

It is found in the cytoplasm. It catalyses the reaction L-threonine + hydrogencarbonate + ATP = L-threonylcarbamoyladenylate + diphosphate + H2O. Required for the formation of a threonylcarbamoyl group on adenosine at position 37 (t(6)A37) in tRNAs that read codons beginning with adenine. Catalyzes the conversion of L-threonine, HCO(3)(-)/CO(2) and ATP to give threonylcarbamoyl-AMP (TC-AMP) as the acyladenylate intermediate, with the release of diphosphate. The sequence is that of Threonylcarbamoyl-AMP synthase from Psychromonas ingrahamii (strain DSM 17664 / CCUG 51855 / 37).